Reading from the N-terminus, the 163-residue chain is Adenosine 5'-monophosphoramidase HINT2 (163 aa).

The transit peptide at 1–17 (MAAAVLLAVGLRAARRT) directs the protein to the mitochondrion. N6-succinyllysine is present on Lys45. Residues 55-163 (IFSRILDRSL…GGRQLQWPPG (109 aa)) form the HIT domain. AMP contacts are provided by Ser63 and Asp80. Lys119 carries the N6-acetyllysine modification. Lys128 bears the N6-acetyllysine; alternate mark. N6-succinyllysine; alternate is present on Lys128. Position 136 (Asn136) interacts with AMP. The residue at position 139 (Lys139) is an N6-acetyllysine. AMP is bound by residues 142 to 145 (AQSV) and 149 to 151 (HIH). Residues 147 to 151 (HLHIH) carry the Histidine triad motif motif. His149 functions as the Tele-AMP-histidine intermediate in the catalytic mechanism.

The protein belongs to the HINT family.

It is found in the mitochondrion. The enzyme catalyses adenosine 5'-phosphoramidate + H2O = AMP + NH4(+). Exhibits adenosine 5'-monophosphoramidase activity, hydrolyzing purine nucleotide phosphoramidates with a single phosphate group such as adenosine 5'monophosphoramidate (AMP-NH2) to yield AMP and NH2. Hydrolyzes adenosine 5'-O-p-nitrophenylphosphoramidate (AMP-pNA). May be involved in steroid biosynthesis. May play a role in apoptosis. The chain is Adenosine 5'-monophosphoramidase HINT2 from Mus musculus (Mouse).